The primary structure comprises 763 residues: Ethylene receptor 2 (763 aa).

3 helical membrane passes run 58–78 (FLIA…ATCS), 86–106 (IVLQ…ITMF), and 115–135 (VVLA…ATAI). 2 residues coordinate Cu cation: Cys-97 and His-101. In terms of domain architecture, GAF spans 190–339 (DRHTILYTTM…VVADQVAVAL (150 aa)). The 234-residue stretch at 382–615 (AMYDGMRRPM…TIMLALQFQL (234 aa)) folds into the Histidine kinase domain. The region spanning 641 to 760 (QVILVDSDDT…ALGDELYRVL (120 aa)) is the Response regulatory domain. Residue Asp-692 is modified to 4-aspartylphosphate.

The protein belongs to the ethylene receptor family. The cofactor is Cu cation. Autophosphorylated on serine, threonine and tyrosine residues.

It is found in the endoplasmic reticulum membrane. The enzyme catalyses ATP + protein L-histidine = ADP + protein N-phospho-L-histidine.. Its function is as follows. Ethylene receptor related to bacterial two-component regulators. Acts as a negative regulator of ethylene signaling. May delay the transition from the vegetative stage to the floral stage by up-regulating GI (GIGANTEA) and RCN1 and cause starch accumulation in stems by down-regulating the alpha-amylase AMY3D. In Oryza sativa subsp. japonica (Rice), this protein is Ethylene receptor 2.